The sequence spans 1262 residues: Cytoplasmic FMR1-interacting protein homolog (1262 aa).

The interval 519 to 550 (LNRMTDVKGKKKSSAPKGDSANSSSSDIRIPR) is disordered.

It belongs to the CYFIP family. Interacts with gex-3.

Its subcellular location is the cytoplasm. Required for initial steps of body morphogenesis. May play a role in egg laying and yolk protein clatherin-mediated endocytosis by oocytes during oogenesis. Plays a role in the formation of muscle connections, also called muscle arm extensions, between the body wall and the motor axons in the dorsal and ventral cord. The chain is Cytoplasmic FMR1-interacting protein homolog from Caenorhabditis elegans.